A 406-amino-acid polypeptide reads, in one-letter code: Tryptophan synthase beta chain (406 aa).

The residue at position 99 (Lys99) is an N6-(pyridoxal phosphate)lysine.

Belongs to the TrpB family. In terms of assembly, tetramer of two alpha and two beta chains. Requires pyridoxal 5'-phosphate as cofactor.

The catalysed reaction is (1S,2R)-1-C-(indol-3-yl)glycerol 3-phosphate + L-serine = D-glyceraldehyde 3-phosphate + L-tryptophan + H2O. The protein operates within amino-acid biosynthesis; L-tryptophan biosynthesis; L-tryptophan from chorismate: step 5/5. The beta subunit is responsible for the synthesis of L-tryptophan from indole and L-serine. The chain is Tryptophan synthase beta chain from Allorhizobium ampelinum (strain ATCC BAA-846 / DSM 112012 / S4) (Agrobacterium vitis (strain S4)).